The sequence spans 91 residues: uncharacterized protein (91 aa).

Residues 50 to 70 (FGFFGGPFIGGLAGGLIGSAL) traverse the membrane as a helical segment.

The protein localises to the cell membrane. This is an uncharacterized protein from Bacillus subtilis (strain 168).